A 1106-amino-acid chain; its full sequence is Zinc finger protein GLI1 (1106 aa).

An SNAG domain region spans residues 1–20 (MFNSMTPPPISSYGEPCCLR). The interval 120 to 124 (SYGHL) is interaction with SUFU. 5 consecutive C2H2-type zinc fingers follow at residues 235–260 (TDCR…NSEH), 268–295 (FVCH…MRRH), 301–325 (HKCT…LRSH), 331–356 (YMCE…NRTH), and 362–387 (YVCK…KTVH). The tract at residues 283–291 (KAQYMLVVH) is interaction with DNA. Interaction with DNA stretches follow at residues 345 to 350 (ASDRAK) and 375 to 381 (DPSSLRK). Disordered stretches follow at residues 375 to 485 (DPSS…DEGP), 516 to 580 (GLKL…SLPG), 732 to 792 (YGGP…LYPG), 817 to 889 (EQGC…PTHS), and 914 to 942 (GRED…SRAK). Residues 413-428 (EPKREREGGPIREESR) show a composition bias toward basic and acidic residues. Residues 442 to 463 (PGAQSSCSSDHSPAGSAANTDS) show a composition bias toward polar residues. K518 carries the post-translational modification N6-acetyllysine. Low complexity-rich tracts occupy residues 544–560 (SSSS…RRSS) and 737–753 (GAAA…SLPL). A compositionally biased stretch (pro residues) spans 754-766 (GPGPPTNYGPNPC). The segment covering 768 to 779 (QQASYPDPTQET) has biased composition (polar residues). A Glycyl lysine isopeptide (Lys-Gly) (interchain with G-Cter in SUMO2) cross-link involves residue K1003. Residues 1054–1087 (DEPQGLSPPPSHDQRGSSGHTPPPSGPPNMAVGN) are disordered.

Belongs to the GLI C2H2-type zinc-finger protein family. As to quaternary structure, interacts with KIF7. Interacts with STK36. Interacts with ZIC1; the interaction enhances transcription activation. Interacts with SUFU; this inhibits transcriptional activation by GLI1. In terms of processing, phosphorylated in vitro by ULK3. Acetylation at Lys-518 down-regulates transcriptional activity. Deacetylated by HDAC1. Post-translationally, ubiquitinated by the CRL2(FEM1B) complex, suppressing GLI1 transcriptional activator activity. In terms of tissue distribution, detected in testis (at protein level). Testis, myometrium and fallopian tube. Also expressed in the brain with highest expression in the cerebellum, optic nerve and olfactory tract. Isoform 1 is detected in brain, spleen, pancreas, liver, kidney and placenta; isoform 2 is not detectable in these tissues.

It is found in the cytoplasm. It localises to the nucleus. Acts as a transcriptional activator. Binds to the DNA consensus sequence 5'-GACCACCCA-3'. Regulates the transcription of specific genes during normal development. Plays a role in craniofacial development and digital development, as well as development of the central nervous system and gastrointestinal tract. Mediates SHH signaling. Plays a role in cell proliferation and differentiation via its role in SHH signaling. In terms of biological role, acts as a transcriptional activator, but activates a different set of genes than isoform 1. Activates expression of CD24, unlike isoform 1. Mediates SHH signaling. Promotes cancer cell migration. The protein is Zinc finger protein GLI1 (GLI1) of Homo sapiens (Human).